We begin with the raw amino-acid sequence, 125 residues long: Small ribosomal subunit protein eS8 (125 aa).

Residues 1-30 form a disordered region; sequence MTIFQGRATRKPSGGKLRPNHSKRRYELGR.

The protein belongs to the eukaryotic ribosomal protein eS8 family. In terms of assembly, part of the 30S ribosomal subunit.

This Picrophilus torridus (strain ATCC 700027 / DSM 9790 / JCM 10055 / NBRC 100828 / KAW 2/3) protein is Small ribosomal subunit protein eS8.